The following is a 162-amino-acid chain: uncharacterized protein (162 aa).

The C2H2-type zinc-finger motif lies at Cys29 to His50. Positions Lys60–Cys93 are disordered. Residues Asn68–Lys87 show a composition bias toward basic residues.

The protein to M.jannaschii MJECS06.

This is an uncharacterized protein from Methanocaldococcus jannaschii (strain ATCC 43067 / DSM 2661 / JAL-1 / JCM 10045 / NBRC 100440) (Methanococcus jannaschii).